A 1409-amino-acid polypeptide reads, in one-letter code: DNA-directed RNA polymerase subunit beta' (1409 aa).

4 residues coordinate Zn(2+): C70, C72, C85, and C88. Mg(2+) is bound by residues D460, D462, and D464. Zn(2+) contacts are provided by C822, C896, C903, and C906.

Belongs to the RNA polymerase beta' chain family. In terms of assembly, the RNAP catalytic core consists of 2 alpha, 1 beta, 1 beta' and 1 omega subunit. When a sigma factor is associated with the core the holoenzyme is formed, which can initiate transcription. The cofactor is Mg(2+). Zn(2+) serves as cofactor.

The catalysed reaction is RNA(n) + a ribonucleoside 5'-triphosphate = RNA(n+1) + diphosphate. DNA-dependent RNA polymerase catalyzes the transcription of DNA into RNA using the four ribonucleoside triphosphates as substrates. The polypeptide is DNA-directed RNA polymerase subunit beta' (Methylobacillus flagellatus (strain ATCC 51484 / DSM 6875 / VKM B-1610 / KT)).